We begin with the raw amino-acid sequence, 338 residues long: Aspartate carbamoyltransferase catalytic subunit (338 aa).

Arg-72 and Thr-73 together coordinate carbamoyl phosphate. Lys-100 serves as a coordination point for L-aspartate. Carbamoyl phosphate contacts are provided by Arg-122, His-152, and Gln-155. L-aspartate-binding residues include Arg-186 and Arg-243. Residues Gly-284 and Pro-285 each coordinate carbamoyl phosphate.

Belongs to the aspartate/ornithine carbamoyltransferase superfamily. ATCase family. As to quaternary structure, heterododecamer (2C3:3R2) of six catalytic PyrB chains organized as two trimers (C3), and six regulatory PyrI chains organized as three dimers (R2).

It catalyses the reaction carbamoyl phosphate + L-aspartate = N-carbamoyl-L-aspartate + phosphate + H(+). The protein operates within pyrimidine metabolism; UMP biosynthesis via de novo pathway; (S)-dihydroorotate from bicarbonate: step 2/3. In terms of biological role, catalyzes the condensation of carbamoyl phosphate and aspartate to form carbamoyl aspartate and inorganic phosphate, the committed step in the de novo pyrimidine nucleotide biosynthesis pathway. This Acinetobacter baylyi (strain ATCC 33305 / BD413 / ADP1) protein is Aspartate carbamoyltransferase catalytic subunit.